We begin with the raw amino-acid sequence, 208 residues long: Small ribosomal subunit protein uS4 (208 aa).

An S4 RNA-binding domain is found at 98–161 (RRLDNVVYRL…KASPRIKELV (64 aa)).

The protein belongs to the universal ribosomal protein uS4 family. In terms of assembly, part of the 30S ribosomal subunit. Contacts protein S5. The interaction surface between S4 and S5 is involved in control of translational fidelity.

In terms of biological role, one of the primary rRNA binding proteins, it binds directly to 16S rRNA where it nucleates assembly of the body of the 30S subunit. With S5 and S12 plays an important role in translational accuracy. The sequence is that of Small ribosomal subunit protein uS4 from Desulforamulus reducens (strain ATCC BAA-1160 / DSM 100696 / MI-1) (Desulfotomaculum reducens).